Here is a 144-residue protein sequence, read N- to C-terminus: Large ribosomal subunit protein uL11 (144 aa).

This sequence belongs to the universal ribosomal protein uL11 family. In terms of assembly, part of the ribosomal stalk of the 50S ribosomal subunit. Interacts with L10 and the large rRNA to form the base of the stalk. L10 forms an elongated spine to which L12 dimers bind in a sequential fashion forming a multimeric L10(L12)X complex. One or more lysine residues are methylated.

Forms part of the ribosomal stalk which helps the ribosome interact with GTP-bound translation factors. The chain is Large ribosomal subunit protein uL11 from Streptomyces griseus subsp. griseus (strain JCM 4626 / CBS 651.72 / NBRC 13350 / KCC S-0626 / ISP 5235).